The primary structure comprises 123 residues: WAP four-disulfide core domain protein 5 (123 aa).

An N-terminal signal peptide occupies residues 1 to 24; sequence MRIQSLLLLGALLAVGSQLPAVFG. 2 WAP domains span residues 27–73 and 74–121; these read KGEK…CVPR and VSVK…RDPA. Cystine bridges form between Cys-34/Cys-62, Cys-41/Cys-66, Cys-49/Cys-61, Cys-55/Cys-70, Cys-81/Cys-109, Cys-88/Cys-113, Cys-96/Cys-108, and Cys-102/Cys-117.

The protein resides in the secreted. Functionally, putative acid-stable proteinase inhibitor. This chain is WAP four-disulfide core domain protein 5 (WFDC5), found in Papio anubis (Olive baboon).